A 289-amino-acid chain; its full sequence is MATIRWPAPAKLNLFLNVNGRRPDGYHELQTLFIFLDHGDWLEFEPLPDTDQLTLSPAIPGVPDEQNLIIRAARLLQARLPSPQGAHIRLEKLLPMGGGIGGGSSDAATTLVALNHLWQAGLGEDELAELGVQLGADVPVFVRGRAAFAEGVGERLQPVELPGAWYLVLKPDCHVATAAVFQDPDLPRATPKMAFHNLLEGEWKNDCELLVKKRYPEVANALGWLLEYAPSRMTGTGACVFAQFEDEKAAREVLAKVPKRWDGFVAKGENISPLFVTLQQISDWDIAKR.

Lys11 is a catalytic residue. 95 to 105 (PMGGGIGGGSS) contacts ATP. Asp137 is an active-site residue.

It belongs to the GHMP kinase family. IspE subfamily.

The enzyme catalyses 4-CDP-2-C-methyl-D-erythritol + ATP = 4-CDP-2-C-methyl-D-erythritol 2-phosphate + ADP + H(+). It functions in the pathway isoprenoid biosynthesis; isopentenyl diphosphate biosynthesis via DXP pathway; isopentenyl diphosphate from 1-deoxy-D-xylulose 5-phosphate: step 3/6. Catalyzes the phosphorylation of the position 2 hydroxy group of 4-diphosphocytidyl-2C-methyl-D-erythritol. In Aeromonas salmonicida (strain A449), this protein is 4-diphosphocytidyl-2-C-methyl-D-erythritol kinase.